Consider the following 66-residue polypeptide: Conotoxin mr5.2 (66 aa).

Residues 1–19 form the signal peptide; it reads MRCVPVFVILLLLIASAPT. A propeptide spanning residues 20 to 48 is cleaved from the precursor; it reads VDAQLKTKDDMPLASFHANVKRTLQILRD. 2 positions are modified to 4-carboxyglutamate: Glu-57 and Glu-61. Asn-65 is subject to Asparagine amide.

In terms of processing, contains 2 disulfide bonds that can be either 'C1-C3, C2-C4' or 'C1-C4, C2-C3', since these disulfide connectivities have been observed for conotoxins with cysteine framework V (for examples, see AC P0DQQ7 and AC P81755). In terms of tissue distribution, expressed by the venom duct.

The protein localises to the secreted. The protein is Conotoxin mr5.2 of Conus marmoreus (Marble cone).